Reading from the N-terminus, the 955-residue chain is 2-oxoglutarate dehydrogenase E1 component (955 aa).

It belongs to the alpha-ketoglutarate dehydrogenase family. Homodimer. Part of the 2-oxoglutarate dehydrogenase (OGDH) complex composed of E1 (2-oxoglutarate dehydrogenase), E2 (dihydrolipoamide succinyltransferase) and E3 (dihydrolipoamide dehydrogenase); the complex contains multiple copies of the three enzymatic components (E1, E2 and E3). The cofactor is thiamine diphosphate.

The catalysed reaction is N(6)-[(R)-lipoyl]-L-lysyl-[protein] + 2-oxoglutarate + H(+) = N(6)-[(R)-S(8)-succinyldihydrolipoyl]-L-lysyl-[protein] + CO2. Functionally, E1 component of the 2-oxoglutarate dehydrogenase (OGDH) complex which catalyzes the decarboxylation of 2-oxoglutarate, the first step in the conversion of 2-oxoglutarate to succinyl-CoA and CO(2). In Bacillus cereus (strain AH820), this protein is 2-oxoglutarate dehydrogenase E1 component.